We begin with the raw amino-acid sequence, 594 residues long: Putative lipase ATG15-1 (594 aa).

Topologically, residues 1–12 (MRRRPLCTSASR) are cytoplasmic. Residues 13–33 (VTASLLLSFLAVSSAAELPIL) traverse the membrane as a helical; Signal-anchor for type II membrane protein segment. The Lumenal portion of the chain corresponds to 34 to 594 (PAPPISPQPH…ANHFVYVLHA (561 aa)). Residues Asn144, Asn179, Asn201, Asn259, and Asn283 are each glycosylated (N-linked (GlcNAc...) asparagine). Ser299 (charge relay system) is an active-site residue. N-linked (GlcNAc...) asparagine glycosylation is found at Asn432 and Asn445. Over residues 447–469 (TETTTTSTSKPTSTSKSSKSNTR) the composition is skewed to low complexity. Disordered stretches follow at residues 447–473 (TETTTTSTSKPTSTSKSSKSNTRTRTE) and 489–509 (TGTQTSTSTPKHTSTSSTSTC). Asn576 and Asn582 each carry an N-linked (GlcNAc...) asparagine glycan.

It belongs to the AB hydrolase superfamily. Lipase family. In terms of assembly, binds to both phosphatidylinositol (PI) and phosphatidylinositol 3,5-bisphosphate (PIP2).

It is found in the endosome. The protein resides in the multivesicular body membrane. It localises to the prevacuolar compartment membrane. It carries out the reaction a triacylglycerol + H2O = a diacylglycerol + a fatty acid + H(+). Functionally, lipase which is essential for lysis of subvacuolar cytoplasm to vacuole targeted bodies and intravacuolar autophagic bodies. Involved in the lysis of intravacuolar multivesicular body (MVB) vesicles. The intravacuolar membrane disintegration by ATG15 is critical to life span extension. This Phaeosphaeria nodorum (strain SN15 / ATCC MYA-4574 / FGSC 10173) (Glume blotch fungus) protein is Putative lipase ATG15-1 (ATG15-1).